The chain runs to 117 residues: DNA polymerase epsilon subunit 4 (117 aa).

Residues 1 to 36 form a disordered region; it reads MAAAAAAGSGTPREEEGPAGEAAASQPQAPTSVPGA. At A2 the chain carries N-acetylalanine. Phosphothreonine is present on T11. Positions 19-30 are enriched in low complexity; that stretch reads AGEAAASQPQAP. S25 bears the Phosphoserine mark.

As to quaternary structure, component of the DNA polymerase epsilon complex consisting of four subunits: the catalytic subunit POLE and the accessory subunits POLE2, POLE3 and POLE4. Interaction with POLE3 is a prerequisite for further binding with POLE and POLE2.

It localises to the nucleus. Accessory component of the DNA polymerase epsilon complex. Participates in DNA repair and in chromosomal DNA replication. The sequence is that of DNA polymerase epsilon subunit 4 (POLE4) from Homo sapiens (Human).